Here is a 318-residue protein sequence, read N- to C-terminus: Mediator of RNA polymerase II transcription subunit 3 (318 aa).

The span at 134-156 (SAAGITKTSSGNDGNTTGSTANT) shows a compositional bias: polar residues. The segment at 134 to 225 (SAAGITKTSS…PSLKQIPNTQ (92 aa)) is disordered. Positions 192–217 (HTGPATAPTTSNSAASAAAAAANTPS) are enriched in low complexity.

This sequence belongs to the Mediator complex subunit 3 family. Component of the Mediator complex.

It is found in the nucleus. Component of the Mediator complex, a coactivator involved in regulated gene transcription of nearly all RNA polymerase II-dependent genes. Mediator functions as a bridge to convey information from gene-specific regulatory proteins to the basal RNA polymerase II transcription machinery. Mediator is recruited to promoters by direct interactions with regulatory proteins and serves as a scaffold for the assembly of a functional preinitiation complex with RNA polymerase II and the general transcription factors. The protein is Mediator of RNA polymerase II transcription subunit 3 (PGD1) of Kluyveromyces lactis (strain ATCC 8585 / CBS 2359 / DSM 70799 / NBRC 1267 / NRRL Y-1140 / WM37) (Yeast).